A 403-amino-acid polypeptide reads, in one-letter code: Argininosuccinate synthase (403 aa).

ATP-binding positions include 10–18 (AYSGGVDTS) and A38. Y89 serves as a coordination point for L-citrulline. ATP is bound at residue G119. Residues T121, N125, and D126 each contribute to the L-aspartate site. N125 contacts L-citrulline. Residues R129, S177, S186, E262, and Y274 each contribute to the L-citrulline site.

This sequence belongs to the argininosuccinate synthase family. Type 1 subfamily. As to quaternary structure, homotetramer.

Its subcellular location is the cytoplasm. It catalyses the reaction L-citrulline + L-aspartate + ATP = 2-(N(omega)-L-arginino)succinate + AMP + diphosphate + H(+). Its pathway is amino-acid biosynthesis; L-arginine biosynthesis; L-arginine from L-ornithine and carbamoyl phosphate: step 2/3. This chain is Argininosuccinate synthase, found in Parasynechococcus marenigrum (strain WH8102).